Consider the following 460-residue polypeptide: Cysteine--tRNA ligase (460 aa).

Cys28 serves as a coordination point for Zn(2+). A 'HIGH' region motif is present at residues 30 to 40; that stretch reads VTIYDLCHIGH. Residues Cys209, His234, and Glu238 each coordinate Zn(2+). The 'KMSKS' region motif lies at 266–270; sequence KMSKS. Residue Lys269 coordinates ATP.

This sequence belongs to the class-I aminoacyl-tRNA synthetase family. Monomer. Zn(2+) serves as cofactor.

The protein localises to the cytoplasm. It catalyses the reaction tRNA(Cys) + L-cysteine + ATP = L-cysteinyl-tRNA(Cys) + AMP + diphosphate. This is Cysteine--tRNA ligase from Vibrio vulnificus (strain CMCP6).